A 288-amino-acid chain; its full sequence is Protease HtpX homolog (288 aa).

The next 2 membrane-spanning stretches (helical) occupy residues 1 to 21 and 23 to 43; these read MHTIKTVLLLGVLTGLFLLAG and IIGGQTGMIIAFFFAMAMNFF. Residue histidine 130 coordinates Zn(2+). Glutamate 131 is an active-site residue. Zn(2+) is bound at residue histidine 134. Transmembrane regions (helical) follow at residues 140–160 and 175–195; these read ILISSIAATIGGAISMLAEMA and IGGLIGSLLLFILAPIAAMII. Glutamate 204 provides a ligand contact to Zn(2+).

It belongs to the peptidase M48B family. Zn(2+) is required as a cofactor.

The protein localises to the cell inner membrane. The sequence is that of Protease HtpX homolog from Persephonella marina (strain DSM 14350 / EX-H1).